A 1240-amino-acid chain; its full sequence is Structural polyprotein (1240 aa).

Residues 1–35 are necessary for nucleocapsid assembly and virus assembly; that stretch reads MFPYPTLNYPPMAPINPMAYRDPNPPRQVAPFRPP. Positions 1-102 are disordered; that stretch reads MFPYPTLNYP…RKPKPGKRQR (102 aa). Positions 23 to 34 are enriched in pro residues; sequence PNPPRQVAPFRP. The segment at 36 to 69 is host transcription inhibition; sequence LAAQIEDLRRSIANLTLKQRAPNPPAGPPAKRKK. Positions 43 to 50 match the Supraphysiological nuclear export signal motif; the sequence is LRRSIANL. A glycan (N-linked (GlcNAc...) asparagine; by host) is linked at asparagine 49. Residues 65–102 are compositionally biased toward basic residues; the sequence is AKRKKPAPKPKPAQAKKKRPPPPAKKQKRKPKPGKRQR. Positions 66 to 70 match the Nuclear localization signal motif; it reads KRKKP. The interval 82–112 is binding to the viral RNA; it reads KRPPPPAKKQKRKPKPGKRQRMCMKLESDKT. Positions 97–111 are ribosome-binding; it reads PGKRQRMCMKLESDK. Position 109 is a phosphoserine (serine 109). Positions 111 to 260 constitute a Peptidase S3 domain; it reads KTFPIMLNGQ…KDTPEGSEPW (150 aa). A Phosphothreonine modification is found at threonine 112. Residues histidine 137, aspartate 159, and serine 211 each act as charge relay system in the active site. The tract at residues 261–272 is functions as an uncleaved signal peptide for the precursor of protein E3/E2; it reads SLATVMCVLANI. Residues 261-682 lie on the Extracellular side of the membrane; that stretch reads SLATVMCVLA…HEVVVYYYNR (422 aa). Residues asparagine 271 and asparagine 638 are each glycosylated (N-linked (GlcNAc...) asparagine; by host). The helical transmembrane segment at 683–703 threads the bilayer; that stretch reads YPLTTIIGLCTCVAIIMVSCV. The Cytoplasmic segment spans residues 704–743; that stretch reads HPCGSFAGLRNLCITPYKLAPNAQVPILLALLCCIKPTRA. 4 S-palmitoyl cysteine; by host lipidation sites follow: cysteine 706, cysteine 716, cysteine 736, and cysteine 737. A transient transmembrane before p62-6K protein processing region spans residues 715–735; it reads LCITPYKLAPNAQVPILLALL. Residues 744 to 758 lie on the Extracellular side of the membrane; it reads DDTLQVLNYLWNNNQ. The helical transmembrane segment at 759 to 779 threads the bilayer; it reads NFFWMQTLIPLAALIVCMRIV. Position 780 (arginine 780) is a topological domain, cytoplasmic. A helical transmembrane segment spans residues 781-801; that stretch reads CLFCCGPAFLLVCGAWAAAYE. Residues 802–1216 are Extracellular-facing; sequence HTAVMPNKVG…WSWLKVLVGG (415 aa). Asparagine 834 is a glycosylation site (N-linked (GlcNAc...) asparagine; by host). Disulfide bonds link cysteine 848–cysteine 913, cysteine 861–cysteine 893, cysteine 862–cysteine 895, and cysteine 867–cysteine 877. The tract at residues 883 to 900 is E1 fusion peptide loop; that stretch reads VYPFMWGGAYCFCDTENT. The N-linked (GlcNAc...) asparagine; by host glycan is linked to asparagine 933. Disulfide bonds link cysteine 1059–cysteine 1071, cysteine 1101–cysteine 1176, and cysteine 1106–cysteine 1180. Residues 1217-1237 traverse the membrane as a helical segment; that stretch reads TSAFIVLGLIATAVVALVLFF. Over 1238 to 1240 the chain is Cytoplasmic; that stretch reads HRH.

Part of a tetrameric complex composed of host CRM1, host importin alpha/beta dimer and the viral capsid; this complex blocks the receptor-mediated transport through the nuclear pore. Interacts with host phosphatase PPP1CA; this interaction dephosphorylates the capsid protein, which increases its ability to bind to the viral genome. Interacts with host karyopherin KPNA4; this interaction allows the nuclear import of the viral capsid protein. Interacts with spike glycoprotein E2. Interacts with host IRAK1; the interaction leads to inhibition of IRAK1-dependent signaling. As to quaternary structure, the precursor of protein E3/E2 and E1 form a heterodimer shortly after synthesis. In terms of assembly, the precursor of protein E3/E2 and E1 form a heterodimer shortly after synthesis. Processing of the precursor of protein E3/E2 into E2 and E3 results in a heterodimer of the spike glycoproteins E2 and E1. Spike at virion surface are constituted of three E2-E1 heterodimers. After target cell attachment and endocytosis, E1 change conformation to form homotrimers. Interacts with 6K protein. Processing of the precursor of protein E3/E2 into E2 and E3 results in a heterodimer of the spike glycoproteins E2 and E1. Spike at virion surface are constituted of three E2-E1 heterodimers. Interacts with 6K protein. As to quaternary structure, interacts with spike glycoprotein E1. Interacts with spike glycoprotein E2. Post-translationally, structural polyprotein: Specific enzymatic cleavages in vivo yield mature proteins. Capsid protein is auto-cleaved during polyprotein translation, unmasking a signal peptide at the N-terminus of the precursor of E3/E2. The remaining polyprotein is then targeted to the host endoplasmic reticulum, where host signal peptidase cleaves it into pE2, 6K and E1 proteins. pE2 is further processed to mature E3 and E2 by host furin in trans-Golgi vesicle. Phosphorylated on serine and threonine residues. In terms of processing, palmitoylated via thioester bonds. These palmitoylations may induce disruption of the C-terminus transmembrane. This would result in the reorientation of E2 C-terminus from lumenal to cytoplasmic side. Post-translationally, N-glycosylated. Palmitoylated via thioester bonds.

Its subcellular location is the virion. The protein localises to the host cytoplasm. The protein resides in the host cell membrane. It localises to the host nucleus. It is found in the virion membrane. The enzyme catalyses Autocatalytic release of the core protein from the N-terminus of the togavirus structural polyprotein by hydrolysis of a -Trp-|-Ser- bond.. Its function is as follows. Forms an icosahedral capsid with a T=4 symmetry composed of 240 copies of the capsid protein surrounded by a lipid membrane through which penetrate 80 spikes composed of trimers of E1-E2 heterodimers. The capsid protein binds to the viral RNA genome at a site adjacent to a ribosome binding site for viral genome translation following genome release. Possesses a protease activity that results in its autocatalytic cleavage from the nascent structural protein. Following its self-cleavage, the capsid protein transiently associates with ribosomes, and within several minutes the protein binds to viral RNA and rapidly assembles into icosahedric core particles. The resulting nucleocapsid eventually associates with the cytoplasmic domain of the spike glycoprotein E2 at the cell membrane, leading to budding and formation of mature virions. In case of infection, new virions attach to target cells and after clathrin-mediated endocytosis their membrane fuses with the host endosomal membrane. This leads to the release of the nucleocapsid into the cytoplasm, followed by an uncoating event necessary for the genomic RNA to become accessible. The uncoating might be triggered by the interaction of capsid proteins with ribosomes. Binding of ribosomes would release the genomic RNA since the same region is genomic RNA-binding and ribosome-binding. Specifically inhibits interleukin-1 receptor-associated kinase 1/IRAK1-dependent signaling during viral entry, representing a means by which the alphaviruses may evade innate immune detection and activation prior to viral gene expression. Inhibits host transcription. Forms a tetrameric complex with XPO1/CRM1 and the nuclear import receptor importin. This complex blocks the central channel of host nuclear pores thereby inhibiting the receptor-mediated nuclear transport and thus the host mRNA and rRNA transcription. The inhibition of transcription is linked to a cytopathic effect on the host cell. Provides the signal sequence for the translocation of the precursor of protein E3/E2 to the host endoplasmic reticulum. Furin-cleaved E3 remains associated with spike glycoprotein E1 and mediates pH protection of the latter during the transport via the secretory pathway. After virion release from the host cell, the assembly protein E3 is gradually released in the extracellular space. In terms of biological role, plays a role in viral attachment to target host cell, by binding to the cell receptor. Synthesized as a p62 precursor which is processed by furin at the cell membrane just before virion budding, giving rise to E2-E1 heterodimer. The p62-E1 heterodimer is stable, whereas E2-E1 is unstable and dissociate at low pH. p62 is processed at the last step, presumably to avoid E1 fusion activation before its final export to cell surface. E2 C-terminus contains a transitory transmembrane that would be disrupted by palmitoylation, resulting in reorientation of the C-terminal tail from lumenal to cytoplasmic side. This step is critical since E2 C-terminus is involved in budding by interacting with capsid proteins. This release of E2 C-terminus in cytoplasm occurs lately in protein export, and precludes premature assembly of particles at the endoplasmic reticulum membrane. Functionally, constitutive membrane protein involved in virus glycoprotein processing, cell permeabilization, and the budding of viral particles. Disrupts the calcium homeostasis of the cell, probably at the endoplasmic reticulum level. This leads to cytoplasmic calcium elevation. Because of its lipophilic properties, the 6K protein is postulated to influence the selection of lipids that interact with the transmembrane domains of the glycoproteins, which, in turn, affects the deformability of the bilayer required for the extreme curvature that occurs as budding proceeds. Present in low amount in virions, about 3% compared to viral glycoproteins. Its function is as follows. Class II viral fusion protein. Fusion activity is inactive as long as E1 is bound to E2 in mature virion. After virus attachment to target cell and endocytosis, acidification of the endosome would induce dissociation of E1/E2 heterodimer and concomitant trimerization of the E1 subunits. This E1 trimer is fusion active, and promotes release of viral nucleocapsid in cytoplasm after endosome and viral membrane fusion. Efficient fusion requires the presence of cholesterol and sphingolipid in the target membrane. Fusion is optimal at levels of about 1 molecule of cholesterol per 2 molecules of phospholipids, and is specific for sterols containing a 3-beta-hydroxyl group. This is Structural polyprotein from Eastern equine encephalitis virus (strain va33[ten broeck]) (EEEV).